The following is a 117-amino-acid chain: Urease subunit beta (117 aa).

Positions 95-117 (NAVNGKLDGGPHPGVPATERGAK) are disordered.

It belongs to the urease beta subunit family. Heterotrimer of UreA (gamma), UreB (beta) and UreC (alpha) subunits. Three heterotrimers associate to form the active enzyme.

Its subcellular location is the cytoplasm. The enzyme catalyses urea + 2 H2O + H(+) = hydrogencarbonate + 2 NH4(+). The protein operates within nitrogen metabolism; urea degradation; CO(2) and NH(3) from urea (urease route): step 1/1. The sequence is that of Urease subunit beta from Pseudarthrobacter chlorophenolicus (strain ATCC 700700 / DSM 12829 / CIP 107037 / JCM 12360 / KCTC 9906 / NCIMB 13794 / A6) (Arthrobacter chlorophenolicus).